We begin with the raw amino-acid sequence, 210 residues long: Probable GTP-binding protein EngB (210 aa).

One can recognise an EngB-type G domain in the interval 25-199 (CGIEVAFAGR…RQKLDSWFSE (175 aa)). GTP contacts are provided by residues 33–40 (GRSNAGKS), 60–64 (GRTQL), 78–81 (DLPG), 145–148 (TKAD), and 178–180 (FSS). 2 residues coordinate Mg(2+): Ser40 and Thr62.

Belongs to the TRAFAC class TrmE-Era-EngA-EngB-Septin-like GTPase superfamily. EngB GTPase family. Requires Mg(2+) as cofactor.

Functionally, necessary for normal cell division and for the maintenance of normal septation. The protein is Probable GTP-binding protein EngB of Salmonella agona (strain SL483).